The chain runs to 390 residues: GTPase Obg (390 aa).

Residues 1 to 159 (MKFVDEAAIL…RDILLELLLL (159 aa)) form the Obg domain. The OBG-type G domain occupies 160 to 333 (ADVGMLGLPN…LCWDVMKFIN (174 aa)). Residues 166–173 (GLPNAGKS), 191–195 (FTTLV), 213–216 (DIPG), 283–286 (NKID), and 314–316 (SAV) contribute to the GTP site. The Mg(2+) site is built by serine 173 and threonine 193. Over residues 366–384 (AEADDDWDDDWDEEDDEGV) the composition is skewed to acidic residues. The disordered stretch occupies residues 366–390 (AEADDDWDDDWDEEDDEGVEIIYQK).

It belongs to the TRAFAC class OBG-HflX-like GTPase superfamily. OBG GTPase family. Monomer. Requires Mg(2+) as cofactor.

It localises to the cytoplasm. An essential GTPase which binds GTP, GDP and possibly (p)ppGpp with moderate affinity, with high nucleotide exchange rates and a fairly low GTP hydrolysis rate. Plays a role in control of the cell cycle, stress response, ribosome biogenesis and in those bacteria that undergo differentiation, in morphogenesis control. This chain is GTPase Obg, found in Serratia proteamaculans (strain 568).